A 179-amino-acid polypeptide reads, in one-letter code: ATP synthase subunit delta (179 aa).

This sequence belongs to the ATPase delta chain family. In terms of assembly, F-type ATPases have 2 components, F(1) - the catalytic core - and F(0) - the membrane proton channel. F(1) has five subunits: alpha(3), beta(3), gamma(1), delta(1), epsilon(1). F(0) has three main subunits: a(1), b(2) and c(10-14). The alpha and beta chains form an alternating ring which encloses part of the gamma chain. F(1) is attached to F(0) by a central stalk formed by the gamma and epsilon chains, while a peripheral stalk is formed by the delta and b chains.

It is found in the cell membrane. In terms of biological role, f(1)F(0) ATP synthase produces ATP from ADP in the presence of a proton or sodium gradient. F-type ATPases consist of two structural domains, F(1) containing the extramembraneous catalytic core and F(0) containing the membrane proton channel, linked together by a central stalk and a peripheral stalk. During catalysis, ATP synthesis in the catalytic domain of F(1) is coupled via a rotary mechanism of the central stalk subunits to proton translocation. Functionally, this protein is part of the stalk that links CF(0) to CF(1). It either transmits conformational changes from CF(0) to CF(1) or is implicated in proton conduction. This chain is ATP synthase subunit delta, found in Clostridium acetobutylicum (strain ATCC 824 / DSM 792 / JCM 1419 / IAM 19013 / LMG 5710 / NBRC 13948 / NRRL B-527 / VKM B-1787 / 2291 / W).